Reading from the N-terminus, the 257-residue chain is Imidazole glycerol phosphate synthase subunit HisF (257 aa).

Residues Asp-11 and Asp-130 contribute to the active site.

This sequence belongs to the HisA/HisF family. Heterodimer of HisH and HisF.

The protein localises to the cytoplasm. It catalyses the reaction 5-[(5-phospho-1-deoxy-D-ribulos-1-ylimino)methylamino]-1-(5-phospho-beta-D-ribosyl)imidazole-4-carboxamide + L-glutamine = D-erythro-1-(imidazol-4-yl)glycerol 3-phosphate + 5-amino-1-(5-phospho-beta-D-ribosyl)imidazole-4-carboxamide + L-glutamate + H(+). Its pathway is amino-acid biosynthesis; L-histidine biosynthesis; L-histidine from 5-phospho-alpha-D-ribose 1-diphosphate: step 5/9. Functionally, IGPS catalyzes the conversion of PRFAR and glutamine to IGP, AICAR and glutamate. The HisF subunit catalyzes the cyclization activity that produces IGP and AICAR from PRFAR using the ammonia provided by the HisH subunit. This is Imidazole glycerol phosphate synthase subunit HisF from Shewanella sediminis (strain HAW-EB3).